A 1004-amino-acid chain; its full sequence is ABC transporter G family member 25 (1004 aa).

A signal peptide spans Met1–Cys27. The chain crosses the membrane as a helical span at residues Ala271–Tyr291. The tract at residues Ser343–Ala373 is disordered. Over residues Glu352–Gly361 the composition is skewed to basic and acidic residues. Residues Lys362–His372 are compositionally biased toward basic residues. An ABC transporter domain is found at Val419–Glu659. ATP is bound at residue Gly451–Thr458. Transmembrane regions (helical) follow at residues Ala776–Ile796, Phe804–Ala824, Leu886–Phe906, Glu907–Thr927, Trp943–Thr963, and Phe978–Leu998.

Belongs to the ABC transporter superfamily. ABCG family. Eye pigment precursor importer (TC 3.A.1.204) subfamily.

It is found in the membrane. The sequence is that of ABC transporter G family member 25 from Oryza sativa subsp. japonica (Rice).